The sequence spans 1235 residues: JNK-interacting protein 3 (1235 aa).

A disordered region spans residues 1 to 22 (MMDNDDALLNNGGPQSGAETVY). The RH1 domain occupies 25–113 (EDNNMVMSEK…VTQYEREKSA (89 aa)). Residues 84-184 (RINQEQDVEL…NKLHERYTEL (101 aa)) are a coiled coil. The tract at residues 278–325 (GAATDSLQQQHQATSPQSPPDTSPVVPNVPPANVGRSTTKKEQRSDNN) is disordered. Residues 282 to 293 (DSLQQQHQATSP) show a composition bias toward polar residues. Pro residues predominate over residues 294 to 307 (QSPPDTSPVVPNVP). A coiled-coil region spans residues 366–493 (GKEVENLIME…AVRLTEILRA (128 aa)). The RH2 domain occupies 456-526 (RKRFTRVEMA…TPSNRPTERI (71 aa)). Disordered regions lie at residues 520–572 (NRPT…MHPA), 813–852 (KPKS…PVNA), and 869–897 (PGAP…STGS). The span at 529–543 (GLGGGPMFRNTGGGS) shows a compositional bias: gly residues. Composition is skewed to low complexity over residues 544–555 (PAHSHGSPSRGS) and 821–830 (NSNSKPQQQQ). Positions 874-897 (RLSSGNSGSDGNQANNNNSSSTGS) are enriched in polar residues.

Belongs to the JIP scaffold family. As to quaternary structure, forms homo- and heterooligomeric complexes. Binds the TPR motif-containing C-terminal of kinesin light chain, Klc. Pre-assembled syd scaffolding complexes are then transported as a cargo of kinesin, to the required subcellular location.

The protein localises to the cytoplasm. In terms of biological role, the JNK-interacting protein (JIP) group of scaffold proteins selectively mediates JNK-signaling by aggregating specific components of the MAPK cascade to form a functional JNK signaling module. May function as a regulator of vesicle transport, through interactions with the JNK-signaling components and motor proteins. Syd is required for efficient kinesin-I mediated axonal transport. The polypeptide is JNK-interacting protein 3 (Drosophila pseudoobscura pseudoobscura (Fruit fly)).